Consider the following 419-residue polypeptide: Zinc finger protein Pegasus (419 aa).

Residue lysine 5 forms a Glycyl lysine isopeptide (Lys-Gly) (interchain with G-Cter in SUMO2) linkage. 3 C2H2-type zinc fingers span residues 82–104, 110–132, and 138–161; these read LKCRYCNYASKGTARLIEHIRIH, HRCHLCPFASAYERHLEAHMRSH, and YKCELCSFRCSDRSNLSHHRRRKH. Residue lysine 185 forms a Glycyl lysine isopeptide (Lys-Gly) (interchain with G-Cter in SUMO2) linkage. Positions 223-236 are enriched in polar residues; the sequence is QTDSYESMAKTTPT. Disordered stretches follow at residues 223-245 and 288-356; these read QTDSYESMAKTTPTGGLPRDPQE and MQQP…PTLP. Low complexity predominate over residues 289–311; sequence QQPSAQAVVSAVSASLPQSSSPA. A compositionally biased stretch (polar residues) spans 332–349; that stretch reads SEPSAHTSTPSMGNSQPS. 2 consecutive C2H2-type zinc fingers follow at residues 364-386 and 392-416; these read HHCQHCDMYFADNILYTIHMGCH and FQCNICGCKCKNKYDFACHFARGQH.

It belongs to the Ikaros C2H2-type zinc-finger protein family. Self-associates. Interacts with other family members; IKZF1, IKZF2, IKZF3 and IKZF4.

Its subcellular location is the nucleus. Transcriptional repressor that binds the core 5'GNNTGTNG-3' DNA consensus sequence. Involved in megakaryocyte differentiation. In Bos taurus (Bovine), this protein is Zinc finger protein Pegasus (IKZF5).